A 123-amino-acid polypeptide reads, in one-letter code: Ribosome-binding factor A (123 aa).

This sequence belongs to the RbfA family. As to quaternary structure, monomer. Binds 30S ribosomal subunits, but not 50S ribosomal subunits or 70S ribosomes.

Its subcellular location is the cytoplasm. One of several proteins that assist in the late maturation steps of the functional core of the 30S ribosomal subunit. Associates with free 30S ribosomal subunits (but not with 30S subunits that are part of 70S ribosomes or polysomes). Required for efficient processing of 16S rRNA. May interact with the 5'-terminal helix region of 16S rRNA. This chain is Ribosome-binding factor A, found in Neisseria meningitidis serogroup C (strain 053442).